The chain runs to 692 residues: Penicillin-binding protein activator LpoA (692 aa).

Positions 1-26 (MLSSITVRTKSGRLIPLVLAATLLAA) are cleaved as a signal peptide. Cys-27 is lipidated: N-palmitoyl cysteine. A lipid anchor (S-diacylglycerol cysteine) is attached at Cys-27. 2 disordered regions span residues 297-316 (AAAA…AAAT) and 324-373 (VNAA…PDAH). The span at 332–363 (PSAQGTDAAAPAAPNDSAALPPLDAAGDPIAP) shows a compositional bias: low complexity.

Belongs to the LpoA family. Interacts with PBP1a.

It is found in the cell outer membrane. Functionally, regulator of peptidoglycan synthesis that is essential for the function of penicillin-binding protein 1A (PBP1a). This chain is Penicillin-binding protein activator LpoA, found in Edwardsiella piscicida.